Consider the following 102-residue polypeptide: NADH-quinone oxidoreductase subunit K (102 aa).

The next 3 helical transmembrane spans lie at 6–26, 30–50, and 65–85; these read MEHG…GLLI, LLFI…AFVV, and ILVI…LLLL.

This sequence belongs to the complex I subunit 4L family. As to quaternary structure, NDH-1 is composed of 14 different subunits. Subunits NuoA, H, J, K, L, M, N constitute the membrane sector of the complex.

It localises to the cell inner membrane. The enzyme catalyses a quinone + NADH + 5 H(+)(in) = a quinol + NAD(+) + 4 H(+)(out). NDH-1 shuttles electrons from NADH, via FMN and iron-sulfur (Fe-S) centers, to quinones in the respiratory chain. The immediate electron acceptor for the enzyme in this species is believed to be ubiquinone. Couples the redox reaction to proton translocation (for every two electrons transferred, four hydrogen ions are translocated across the cytoplasmic membrane), and thus conserves the redox energy in a proton gradient. The protein is NADH-quinone oxidoreductase subunit K of Aeromonas salmonicida (strain A449).